The sequence spans 497 residues: L-amino-acid oxidase BjussuLAAO-I (497 aa).

Positions 1-13 are cleaved as a signal peptide; the sequence is MNVFFMFSKPGKL. An intrachain disulfide couples Cys-23 to Cys-186. FAD is bound by residues 56–57, 76–77, 76–80, Gln-84, and 100–103; these read MS, EA, EASER, and GPMR. Arg-103 contacts substrate. A glycan (N-linked (GlcNAc...) asparagine) is linked at Asn-185. His-236 is a substrate binding site. FAD is bound at residue Val-274. Cys-344 and Cys-425 form a disulfide bridge. Residue Tyr-385 coordinates substrate. FAD contacts are provided by residues Glu-470, 477 to 482, and 478 to 482; these read GWIAST and WIAST. A substrate-binding site is contributed by 477 to 478; the sequence is GW.

The protein belongs to the flavin monoamine oxidase family. FIG1 subfamily. In terms of assembly, homodimer; non-covalently linked. The cofactor is FAD. Expressed by the venom gland.

The protein localises to the secreted. The enzyme catalyses an L-alpha-amino acid + O2 + H2O = a 2-oxocarboxylate + H2O2 + NH4(+). It catalyses the reaction L-leucine + O2 + H2O = 4-methyl-2-oxopentanoate + H2O2 + NH4(+). It carries out the reaction L-phenylalanine + O2 + H2O = 3-phenylpyruvate + H2O2 + NH4(+). The catalysed reaction is L-tryptophan + O2 + H2O = indole-3-pyruvate + H2O2 + NH4(+). The enzyme catalyses L-methionine + O2 + H2O = 4-methylsulfanyl-2-oxobutanoate + H2O2 + NH4(+). It catalyses the reaction L-isoleucine + O2 + H2O = (S)-3-methyl-2-oxopentanoate + H2O2 + NH4(+). It carries out the reaction L-tyrosine + O2 + H2O = 3-(4-hydroxyphenyl)pyruvate + H2O2 + NH4(+). The catalysed reaction is L-cysteine + O2 + H2O = 2-oxo-3-sulfanylpropanoate + H2O2 + NH4(+). Catalyzes an oxidative deamination of predominantly hydrophobic and aromatic L-amino acids, thus producing hydrogen peroxide that may contribute to the diverse toxic effects of this enzyme. Shows high specificity for L-Met, L-Leu, L-Phe, L-Tyr, L-Ile, L-Trp, a moderate activity on L-Cys and low activity on L-Val, L-Lys, L-Arg, L-His, L-Gln, L-Thr and L-Ser. Exhibits diverse biological activities, such as hemorrhage, hemolysis, edema, apoptosis of vascular endothelial cells or tumor cell lines, and antibacterial, as well as regulation of platelet aggregation. Effects of snake L-amino oxidases on platelets are controversial, since they either induce aggregation or inhibit agonist-induced aggregation. These different effects are probably due to different experimental conditions. In vitro, shows parasiticidal activities against both trypanosomes and leishmania, as a result of enzyme-catalyzed hydrogen peroxide production. In Bothrops jararacussu (Jararacussu), this protein is L-amino-acid oxidase BjussuLAAO-I.